Reading from the N-terminus, the 83-residue chain is Short neurotoxin B (83 aa).

The first 21 residues, 1–21 (MKTLLLTLVVVTIVCLDLGYT), serve as a signal peptide directing secretion. Intrachain disulfides connect cysteine 24/cysteine 45, cysteine 38/cysteine 62, cysteine 64/cysteine 75, and cysteine 76/cysteine 81.

This sequence belongs to the three-finger toxin family. Short-chain subfamily. Type I alpha-neurotoxin sub-subfamily. As to expression, expressed by the venom gland.

The protein resides in the secreted. Its function is as follows. Binds to muscle nicotinic acetylcholine receptor (nAChR) and inhibit acetylcholine from binding to the receptor, thereby impairing neuromuscular transmission. The polypeptide is Short neurotoxin B (Laticauda laticaudata (Blue-ringed sea krait)).